We begin with the raw amino-acid sequence, 495 residues long: ATP synthase subunit beta, chloroplastic (495 aa).

Gly172–Thr179 is an ATP binding site.

It belongs to the ATPase alpha/beta chains family. In terms of assembly, F-type ATPases have 2 components, CF(1) - the catalytic core - and CF(0) - the membrane proton channel. CF(1) has five subunits: alpha(3), beta(3), gamma(1), delta(1), epsilon(1). CF(0) has four main subunits: a(1), b(1), b'(1) and c(9-12).

The protein localises to the plastid. It localises to the chloroplast thylakoid membrane. It catalyses the reaction ATP + H2O + 4 H(+)(in) = ADP + phosphate + 5 H(+)(out). Functionally, produces ATP from ADP in the presence of a proton gradient across the membrane. The catalytic sites are hosted primarily by the beta subunits. The protein is ATP synthase subunit beta, chloroplastic of Pteridium aquilinum (Bracken fern).